The chain runs to 232 residues: Chromosome partition protein MukE (232 aa).

A disordered region spans residues 203–232; that stretch reads HTKEPSQGSLLSEEDQEEQAQEEMTEEGEA. Residues 214–232 are compositionally biased toward acidic residues; sequence SEEDQEEQAQEEMTEEGEA.

It belongs to the MukE family. In terms of assembly, interacts, and probably forms a ternary complex, with MukF and MukB. The complex formation is stimulated by calcium or magnesium.

The protein localises to the cytoplasm. Its subcellular location is the nucleoid. Functionally, involved in chromosome condensation, segregation and cell cycle progression. May participate in facilitating chromosome segregation by condensation DNA from both sides of a centrally located replisome during cell division. Probably acts via its interaction with MukB and MukF. This chain is Chromosome partition protein MukE, found in Vibrio parahaemolyticus serotype O3:K6 (strain RIMD 2210633).